Consider the following 841-residue polypeptide: Chitin synthase 1 (841 aa).

The span at 1–13 (MNPGQKQEHDQYP) shows a compositional bias: basic and acidic residues. The segment at 1–98 (MNPGQKQEHD…YGEAPRRQPR (98 aa)) is disordered. Pro residues predominate over residues 76–85 (PPQPMGPPSP). 9 consecutive transmembrane segments (helical) span residues 302–322 (WFFQ…IDVG), 385–405 (SVFG…FTAL), 526–546 (LIFS…LTSA), 564–584 (ILHT…FILA), 602–622 (FFAI…VVGV), 644–664 (NIII…FLFF), 673–693 (FIQY…YAFC), 778–798 (VISW…ENIL), and 816–836 (LWSV…YLIF).

The protein belongs to the chitin synthase family.

It localises to the cell membrane. The catalysed reaction is [(1-&gt;4)-N-acetyl-beta-D-glucosaminyl](n) + UDP-N-acetyl-alpha-D-glucosamine = [(1-&gt;4)-N-acetyl-beta-D-glucosaminyl](n+1) + UDP + H(+). In terms of biological role, polymerizes chitin, a structural polymer of the cell wall and septum, by transferring the sugar moiety of UDP-GlcNAc to the non-reducing end of the growing chitin polymer. This is Chitin synthase 1 (chs1) from Phycomyces blakesleeanus (strain ATCC 8743b / DSM 1359 / FGSC 10004 / NBRC 33097 / NRRL 1555).